The chain runs to 489 residues: Dipeptide and tripeptide permease B (489 aa).

Residues 1–27 (MNTTAPTGLLQQPRPFFMIFFVELWER) lie on the Cytoplasmic side of the membrane. The helical transmembrane segment at 28–48 (FGYYGVQGILAVFFVKQLGFS) threads the bilayer. Topologically, residues 49-52 (QEQA) are periplasmic. The helical transmembrane segment at 53 to 73 (FITFGAFAALVYGLISIGGYV) threads the bilayer. The Cytoplasmic segment spans residues 74-82 (GDHLLGTKR). The chain crosses the membrane as a helical span at residues 83–103 (TLVLGAIVLAIGYFMTGMSLL). At 104-106 (NPD) the chain is on the periplasmic side. The helical transmembrane segment at 107 to 127 (LIFIALGTIAVGNGLFKANPA) threads the bilayer. Topologically, residues 128–146 (SLLSKCYQPKDPRLDGAFT) are cytoplasmic. Residues 147-167 (LFYMSINIGSLLSLSLAPVIA) form a helical membrane-spanning segment. Topologically, residues 168 to 172 (DKFGY) are periplasmic. Residues 173–193 (AVTYNLCGAGLIVALLVYFAC) traverse the membrane as a helical segment. Over 194 to 214 (RGMVKNIGSEPDHKPLRFRNL) the chain is Cytoplasmic. Residues 215-235 (LLVLLGTVVMIFLCAWLMHNV) form a helical membrane-spanning segment. Residue Lys236 is a topological domain, periplasmic. Residues 237-257 (IANLVLIVLSIVVTIFFFREA) form a helical membrane-spanning segment. Residues 258–267 (FRLDKTGRNK) are Cytoplasmic-facing. Residues 268–288 (MFVAFILMIEAVLFYILYAQM) form a helical membrane-spanning segment. The Periplasmic portion of the chain corresponds to 289–315 (PTSLNFFAINNVHHEILGFAINPVSFQ). A helical membrane pass occupies residues 316–338 (ALNPFWVVVASPVLAAIYTRLGS). At 339 to 348 (KGKDLTMPMK) the chain is on the cytoplasmic side. A helical transmembrane segment spans residues 349 to 369 (FTLGMFLCALGFLTAAAGMWF). Over 370–379 (ADAQGLTSPW) the chain is Periplasmic. Residues 380 to 400 (FIVLVYLFQSLGELLISALGL) form a helical membrane-spanning segment. Residues 401 to 410 (AMVAALVPQH) lie on the Cytoplasmic side of the membrane. Residues 411-431 (LMGFILGMWFLTQAAAFLLGG) traverse the membrane as a helical segment. Over 432–454 (YVATFTAVPENITDPLQTLPIYT) the chain is Periplasmic. A helical transmembrane segment spans residues 455-475 (GVFSKIGLVTLAVTVVMAIMV). Residues 476-489 (PWLNRMINTPGTEQ) are Cytoplasmic-facing.

This sequence belongs to the major facilitator superfamily. Proton-dependent oligopeptide transporter (POT/PTR) (TC 2.A.17) family. DtpB subfamily.

The protein localises to the cell inner membrane. Proton-dependent permease that transports di- and tripeptides. The protein is Dipeptide and tripeptide permease B of Salmonella typhimurium (strain LT2 / SGSC1412 / ATCC 700720).